The following is a 293-amino-acid chain: Nitrogenase iron protein (293 aa).

Residue 10 to 17 (GKGGIGKS) coordinates ATP. Cys98 provides a ligand contact to [4Fe-4S] cluster. The residue at position 101 (Arg101) is an ADP-ribosylarginine; by dinitrogenase reductase ADP-ribosyltransferase. Cys133 serves as a coordination point for [4Fe-4S] cluster.

Belongs to the NifH/BchL/ChlL family. In terms of assembly, homodimer. The cofactor is [4Fe-4S] cluster. In terms of processing, the reversible ADP-ribosylation of Arg-101 inactivates the nitrogenase reductase and regulates nitrogenase activity.

The enzyme catalyses N2 + 8 reduced [2Fe-2S]-[ferredoxin] + 16 ATP + 16 H2O = H2 + 8 oxidized [2Fe-2S]-[ferredoxin] + 2 NH4(+) + 16 ADP + 16 phosphate + 6 H(+). The key enzymatic reactions in nitrogen fixation are catalyzed by the nitrogenase complex, which has 2 components: the iron protein and the molybdenum-iron protein. This Klebsiella pneumoniae (strain 342) protein is Nitrogenase iron protein.